Consider the following 171-residue polypeptide: Tetratricopeptide repeat protein 9C (171 aa).

TPR repeat units lie at residues 8–41 (AQLYKEKGNQCYREGKYRDAVSGYHRALLQLRGL), 72–107 (TDCYNNLAACLLQMEPVNYERVKEYSQKVLERQPDN), and 108–141 (AKALYRAGVAFFHLQDYDQARHYLMAAVNRKPKD).

The protein belongs to the TTC9 family.

The polypeptide is Tetratricopeptide repeat protein 9C (TTC9C) (Bos taurus (Bovine)).